Consider the following 111-residue polypeptide: T cell receptor beta variable 30 (111 aa).

A signal peptide spans 1 to 18; it reads MLCSLLALLLGTFFGVRS. The 93-residue stretch at 19 to 111 folds into the Ig-like domain; sequence QTIHQWPATL…DSGFYLCAWS (93 aa). A disulfide bridge links Cys40 with Cys108. Asn80 carries N-linked (GlcNAc...) asparagine glycosylation.

In terms of assembly, alpha-beta TR is a heterodimer composed of an alpha and beta chain; disulfide-linked. The alpha-beta TR is associated with the transmembrane signaling CD3 coreceptor proteins to form the TR-CD3 (TcR or TCR). The assembly of alpha-beta TR heterodimers with CD3 occurs in the endoplasmic reticulum where a single alpha-beta TR heterodimer associates with one CD3D-CD3E heterodimer, one CD3G-CD3E heterodimer and one CD247 homodimer forming a stable octameric structure. CD3D-CD3E and CD3G-CD3E heterodimers preferentially associate with TR alpha and TR beta chains, respectively. The association of the CD247 homodimer is the last step of TcR assembly in the endoplasmic reticulum and is required for transport to the cell surface.

Its subcellular location is the cell membrane. In terms of biological role, v region of the variable domain of T cell receptor (TR) beta chain that participates in the antigen recognition. Alpha-beta T cell receptors are antigen specific receptors which are essential to the immune response and are present on the cell surface of T lymphocytes. Recognize peptide-major histocompatibility (MH) (pMH) complexes that are displayed by antigen presenting cells (APC), a prerequisite for efficient T cell adaptive immunity against pathogens. Binding of alpha-beta TR to pMH complex initiates TR-CD3 clustering on the cell surface and intracellular activation of LCK that phosphorylates the ITAM motifs of CD3G, CD3D, CD3E and CD247 enabling the recruitment of ZAP70. In turn ZAP70 phosphorylates LAT, which recruits numerous signaling molecules to form the LAT signalosome. The LAT signalosome propagates signal branching to three major signaling pathways, the calcium, the mitogen-activated protein kinase (MAPK) kinase and the nuclear factor NF-kappa-B (NF-kB) pathways, leading to the mobilization of transcription factors that are critical for gene expression and essential for T cell growth and differentiation. The T cell repertoire is generated in the thymus, by V-(D)-J rearrangement. This repertoire is then shaped by intrathymic selection events to generate a peripheral T cell pool of self-MH restricted, non-autoaggressive T cells. Post-thymic interaction of alpha-beta TR with the pMH complexes shapes TR structural and functional avidity. The sequence is that of T cell receptor beta variable 30 from Homo sapiens (Human).